Consider the following 360-residue polypeptide: Mannose-1-phosphate guanyltransferase beta-B (360 aa).

It belongs to the transferase hexapeptide repeat family.

It catalyses the reaction alpha-D-mannose 1-phosphate + GTP + H(+) = GDP-alpha-D-mannose + diphosphate. It participates in nucleotide-sugar biosynthesis; GDP-alpha-D-mannose biosynthesis; GDP-alpha-D-mannose from alpha-D-mannose 1-phosphate (GTP route): step 1/1. Its function is as follows. Catalyzes the formation of GDP-mannose, an essential precursor of glycan moieties of glycoproteins and glycolipids. The polypeptide is Mannose-1-phosphate guanyltransferase beta-B (gmppb-b) (Xenopus laevis (African clawed frog)).